A 227-amino-acid chain; its full sequence is Cytochrome c oxidase subunit 2 (227 aa).

The Mitochondrial intermembrane portion of the chain corresponds to 1-14 (MAHAVQYGFQDAAA). A helical transmembrane segment spans residues 15 to 45 (PIMEELLYFHDHTLMIVFMISSLVLYIISLM). Residues 46–59 (LSTELTHTSTMDAQ) lie on the Mitochondrial matrix side of the membrane. The chain crosses the membrane as a helical span at residues 60-87 (EVETVWTILPAVILILIALPSLRILYMM). Residues 88-227 (DEIETPSLTL…YFEEWLLKTL (140 aa)) are Mitochondrial intermembrane-facing. Residues histidine 161, cysteine 196, glutamate 198, cysteine 200, histidine 204, and methionine 207 each contribute to the Cu cation site. Glutamate 198 lines the Mg(2+) pocket. Tyrosine 218 carries the phosphotyrosine modification.

The protein belongs to the cytochrome c oxidase subunit 2 family. As to quaternary structure, component of the cytochrome c oxidase (complex IV, CIV), a multisubunit enzyme composed of 14 subunits. The complex is composed of a catalytic core of 3 subunits MT-CO1, MT-CO2 and MT-CO3, encoded in the mitochondrial DNA, and 11 supernumerary subunits COX4I, COX5A, COX5B, COX6A, COX6B, COX6C, COX7A, COX7B, COX7C, COX8 and NDUFA4, which are encoded in the nuclear genome. The complex exists as a monomer or a dimer and forms supercomplexes (SCs) in the inner mitochondrial membrane with NADH-ubiquinone oxidoreductase (complex I, CI) and ubiquinol-cytochrome c oxidoreductase (cytochrome b-c1 complex, complex III, CIII), resulting in different assemblies (supercomplex SCI(1)III(2)IV(1) and megacomplex MCI(2)III(2)IV(2)). Found in a complex with TMEM177, COA6, COX18, COX20, SCO1 and SCO2. Interacts with TMEM177 in a COX20-dependent manner. Interacts with COX20. Interacts with COX16. Cu cation is required as a cofactor.

The protein localises to the mitochondrion inner membrane. It carries out the reaction 4 Fe(II)-[cytochrome c] + O2 + 8 H(+)(in) = 4 Fe(III)-[cytochrome c] + 2 H2O + 4 H(+)(out). Its function is as follows. Component of the cytochrome c oxidase, the last enzyme in the mitochondrial electron transport chain which drives oxidative phosphorylation. The respiratory chain contains 3 multisubunit complexes succinate dehydrogenase (complex II, CII), ubiquinol-cytochrome c oxidoreductase (cytochrome b-c1 complex, complex III, CIII) and cytochrome c oxidase (complex IV, CIV), that cooperate to transfer electrons derived from NADH and succinate to molecular oxygen, creating an electrochemical gradient over the inner membrane that drives transmembrane transport and the ATP synthase. Cytochrome c oxidase is the component of the respiratory chain that catalyzes the reduction of oxygen to water. Electrons originating from reduced cytochrome c in the intermembrane space (IMS) are transferred via the dinuclear copper A center (CU(A)) of subunit 2 and heme A of subunit 1 to the active site in subunit 1, a binuclear center (BNC) formed by heme A3 and copper B (CU(B)). The BNC reduces molecular oxygen to 2 water molecules using 4 electrons from cytochrome c in the IMS and 4 protons from the mitochondrial matrix. In Galago senegalensis (Northern lesser bushbaby), this protein is Cytochrome c oxidase subunit 2 (MT-CO2).